The sequence spans 963 residues: Bifunctional glutamine synthetase adenylyltransferase/adenylyl-removing enzyme (963 aa).

The interval 1 to 451 (MAAPSELQLY…EHFADIIAER (451 aa)) is adenylyl removase. The tract at residues 461 to 963 (TIEWKALWAG…VAFWEKVFAE (503 aa)) is adenylyl transferase.

It belongs to the GlnE family. Mg(2+) is required as a cofactor.

It carries out the reaction [glutamine synthetase]-O(4)-(5'-adenylyl)-L-tyrosine + phosphate = [glutamine synthetase]-L-tyrosine + ADP. The enzyme catalyses [glutamine synthetase]-L-tyrosine + ATP = [glutamine synthetase]-O(4)-(5'-adenylyl)-L-tyrosine + diphosphate. Functionally, involved in the regulation of glutamine synthetase GlnA, a key enzyme in the process to assimilate ammonia. When cellular nitrogen levels are high, the C-terminal adenylyl transferase (AT) inactivates GlnA by covalent transfer of an adenylyl group from ATP to specific tyrosine residue of GlnA, thus reducing its activity. Conversely, when nitrogen levels are low, the N-terminal adenylyl removase (AR) activates GlnA by removing the adenylyl group by phosphorolysis, increasing its activity. The regulatory region of GlnE binds the signal transduction protein PII (GlnB) which indicates the nitrogen status of the cell. The chain is Bifunctional glutamine synthetase adenylyltransferase/adenylyl-removing enzyme from Hahella chejuensis (strain KCTC 2396).